An 88-amino-acid polypeptide reads, in one-letter code: MLKLICIAFLVTVLTLVAGQDSLDPAEFGCADDVNQAELLKNNDICLQCEDLHKEGVVFSLCKTNCFTTEYFQHCVKDLEEAKKEPPE.

The signal sequence occupies residues Met-1–Gly-19. At Gln-20 the chain carries Pyrrolidone carboxylic acid. 3 disulfides stabilise this stretch: Cys-30-Cys-66, Cys-46-Cys-62, and Cys-49-Cys-75.

This sequence belongs to the arthropod CHH/MIH/GIH/VIH hormone family. Post-translationally, the N-terminus is blocked. As to expression, expressed by the venom gland.

It is found in the secreted. May increase the toxicity of alpha-latrotoxin and/or other venom components. Is non-toxic to mice and to the cockroach Periplaneta americana. In Latrodectus tredecimguttatus (Mediterranean black widow spider), this protein is Alpha-latrotoxin-associated low molecular weight protein-2.